Consider the following 456-residue polypeptide: UDP-N-acetylmuramate--L-alanine ligase (456 aa).

114–120 provides a ligand contact to ATP; sequence GTHGKTT.

The protein belongs to the MurCDEF family.

It is found in the cytoplasm. The catalysed reaction is UDP-N-acetyl-alpha-D-muramate + L-alanine + ATP = UDP-N-acetyl-alpha-D-muramoyl-L-alanine + ADP + phosphate + H(+). It functions in the pathway cell wall biogenesis; peptidoglycan biosynthesis. Its function is as follows. Cell wall formation. This Porphyromonas gingivalis (strain ATCC 33277 / DSM 20709 / CIP 103683 / JCM 12257 / NCTC 11834 / 2561) protein is UDP-N-acetylmuramate--L-alanine ligase.